We begin with the raw amino-acid sequence, 251 residues long: Triosephosphate isomerase (251 aa).

Residue 9–11 (NWK) participates in substrate binding. The active-site Electrophile is H95. The Proton acceptor role is filled by E167. Residues G173, S213, and 234-235 (GG) each bind substrate.

The protein belongs to the triosephosphate isomerase family. In terms of assembly, homodimer.

It localises to the cytoplasm. The enzyme catalyses D-glyceraldehyde 3-phosphate = dihydroxyacetone phosphate. The protein operates within carbohydrate biosynthesis; gluconeogenesis. Its pathway is carbohydrate degradation; glycolysis; D-glyceraldehyde 3-phosphate from glycerone phosphate: step 1/1. Functionally, involved in the gluconeogenesis. Catalyzes stereospecifically the conversion of dihydroxyacetone phosphate (DHAP) to D-glyceraldehyde-3-phosphate (G3P). The sequence is that of Triosephosphate isomerase from Pelobacter propionicus (strain DSM 2379 / NBRC 103807 / OttBd1).